A 1412-amino-acid polypeptide reads, in one-letter code: Erbin (1412 aa).

17 LRR repeats span residues 23-44 (TVTT…IFTF), 47-68 (TLEE…LFNC), 70-91 (SLHK…IANL), 93-114 (NLRE…IKNC), 116-137 (VLTI…FSQL), 139-161 (NLTQ…GRLT), 162-183 (KLQI…MNRL), 185-206 (QLER…LEQL), 208-229 (GLKE…IGSL), 231-252 (QLTY…ISTC), 254-275 (NLQD…IGSL), 277-298 (NITT…IGGL), 300-321 (SVEE…IGQL), 323-344 (NLRT…IGSW), 346-367 (NITV…MGDM), 369-391 (KLKV…TKLQ), and 392-413 (QLTA…QKET). Phosphoserine occurs at positions 440 and 444. Disordered stretches follow at residues 464-489 (CDED…PYPD) and 506-542 (KDEE…TTTV). Residues 470-480 (EREAPPREGNL) are compositionally biased toward basic and acidic residues. Tyrosine 483 is subject to Phosphotyrosine. Threonine 485 carries the post-translational modification Phosphothreonine. Residues 506–532 (KDEETNEDSGRDLKPHEDQQDINKDVG) show a composition bias toward basic and acidic residues. Residues 533-542 (VKTSESTTTV) are compositionally biased toward low complexity. Phosphoserine is present on residues serine 569, serine 598, serine 602, serine 603, and serine 620. A disordered region spans residues 615–681 (PLIETSINQP…TDSSQDTSLC (67 aa)). The segment covering 632 to 641 (NKKDDTKETD) has biased composition (basic and acidic residues). Residues 650–662 (NSNQNNSNCSSPS) show a composition bias toward low complexity. Polar residues predominate over residues 663–681 (RMSDSVSLNTDSSQDTSLC). Serine 715 carries the post-translational modification Phosphoserine. The segment at 803–867 (ETEHLENGNK…PQKSGPVGSV (65 aa)) is disordered. Over residues 817–835 (ESVNKVNGHSEETSQSPNR) the composition is skewed to polar residues. A phosphoserine mark is found at serine 852, serine 857, and serine 872. Threonine 917 carries the post-translational modification Phosphothreonine. Residue tyrosine 920 is modified to Phosphotyrosine. The residue at position 931 (serine 931) is a Phosphoserine. Position 972 is a phosphotyrosine (tyrosine 972). Disordered regions lie at residues 997–1021 (NPQI…NQSY) and 1075–1192 (QRQS…KSKV). Over residues 1075-1086 (QRQSSVSSTASV) the composition is skewed to polar residues. The residue at position 1104 (tyrosine 1104) is a Phosphotyrosine. Residues 1157-1171 (MSVSDFNYSRTSPSK) are compositionally biased toward polar residues. Residues serine 1158, serine 1179, and serine 1286 each carry the phosphoserine modification. Residues 1321–1410 (EIRVRVEKDP…TVELIIVREV (90 aa)) form the PDZ domain.

It belongs to the LAP (LRR and PDZ) protein family. In terms of assembly, interacts with ERBB2, BPAG1 and ITGB4. May favor the localization of ERBB2, by restricting its presence to the basolateral membrane of epithelial cells. Also found to interact with ARVCF and delta catenin. Interacts (via C-terminus) with DST Isoform 3 (via N-terminus). Interacts with NOD2 (via CARD domain). Highly expressed in brain, heart, kidney, muscle and stomach, followed by liver, spleen and intestine.

It is found in the cell junction. Its subcellular location is the hemidesmosome. The protein resides in the nucleus membrane. The protein localises to the basolateral cell membrane. Its function is as follows. Acts as an adapter for the receptor ERBB2, in epithelia. By binding the unphosphorylated 'Tyr-1248' of receptor ERBB2, it may contribute to stabilize this unphosphorylated state. Inhibits NOD2-dependent NF-kappa-B signaling and pro-inflammatory cytokine secretion. The sequence is that of Erbin from Homo sapiens (Human).